Reading from the N-terminus, the 474-residue chain is uncharacterized protein (474 aa).

Helical transmembrane passes span 17–39, 44–61, 81–103, 144–166, 186–208, 239–256, 268–286, 319–341, 385–407, and 444–466; these read ILGG…SVYY, FLNF…GFVL, LAWL…YFSY, GVGI…YLLY, IIWI…GLSF, IVMI…FSIH, IQTK…IISI, LSLF…TGGV, AFVV…IALG, and IIAM…TLYF.

Belongs to the TrkH potassium transport family.

It is found in the cell membrane. This is an uncharacterized protein from Methanocaldococcus jannaschii (strain ATCC 43067 / DSM 2661 / JAL-1 / JCM 10045 / NBRC 100440) (Methanococcus jannaschii).